A 599-amino-acid polypeptide reads, in one-letter code: uncharacterized protein (599 aa).

49–56 serves as a coordination point for ATP; it reads GPPGSGKT. The Macro domain maps to 416 to 599; sequence AEVRKELEYK…TKIFEEKFSV (184 aa).

It in the N-terminal section; belongs to the AAA ATPase family. RarA/MGS1/WRNIP1 subfamily.

This is an uncharacterized protein from Thermotoga maritima (strain ATCC 43589 / DSM 3109 / JCM 10099 / NBRC 100826 / MSB8).